Reading from the N-terminus, the 638-residue chain is DEAD-box ATP-dependent RNA helicase 52B (638 aa).

2 stretches are compositionally biased toward low complexity: residues 1 to 21 and 40 to 67; these read MRSSWADSAANAEESAPAAAA and GQAAPAAPAQAGALPSAAAAAQPSVGQP. Residues 1–129 form a disordered region; that stretch reads MRSSWADSAA…WDRRDREPDP (129 aa). The segment covering 79–112 has biased composition (gly residues); the sequence is VNGGGGGGGGSVGGSRQGFGAGGRGGGGGGGGGA. Residues 119–128 are compositionally biased toward basic and acidic residues; that stretch reads GWDRRDREPD. The Q motif signature appears at 169-197; that stretch reads NTFAEIDLGDALNENIRRCKYVKPTPVQR. Positions 200–384 constitute a Helicase ATP-binding domain; the sequence is IPISIAGRDL…SDFLADYIFL (185 aa). An ATP-binding site is contributed by 213–220; the sequence is AQTGSGKT. The DEAD box motif lies at 328-331; it reads DEAD. The Helicase C-terminal domain maps to 411-562; the sequence is YLMDLLHAQR…EVPQWLERYA (152 aa). The tract at residues 565-638 is disordered; that stretch reads SSFGGGGGRN…GGQGFSSAWD (74 aa). Residues 567-583 are compositionally biased toward gly residues; it reads FGGGGGRNRRSGGGARF. Positions 584 to 593 are enriched in basic and acidic residues; that stretch reads GGRDFRRDRG. Residues 594-632 show a composition bias toward gly residues; that stretch reads SGGGGYGGGGGGYGGGGYGGGGGGGGYGGGSSYGGGGQG.

The protein belongs to the DEAD box helicase family. DDX3/DED1 subfamily.

The enzyme catalyses ATP + H2O = ADP + phosphate + H(+). The sequence is that of DEAD-box ATP-dependent RNA helicase 52B (PL10B) from Oryza sativa subsp. japonica (Rice).